A 210-amino-acid polypeptide reads, in one-letter code: Chaperone protein TorD (210 aa).

Belongs to the TorD/DmsD family. TorD subfamily.

It localises to the cytoplasm. Functionally, involved in the biogenesis of TorA. Acts on TorA before the insertion of the molybdenum cofactor and, as a result, probably favors a conformation of the apoenzyme that is competent for acquiring the cofactor. The sequence is that of Chaperone protein TorD from Salmonella newport (strain SL254).